The primary structure comprises 246 residues: UDP-N-acetyl-D-mannosaminuronic acid transferase (246 aa).

The protein belongs to the glycosyltransferase 26 family.

The catalysed reaction is UDP-N-acetyl-alpha-D-mannosaminouronate + N-acetyl-alpha-D-glucosaminyl-di-trans,octa-cis-undecaprenyl diphosphate = beta-D-ManNAcA-(1-&gt;4)-alpha-D-GlcNAc-di-trans,octa-cis-undecaprenyl diphosphate + UDP + H(+). The protein operates within bacterial outer membrane biogenesis; enterobacterial common antigen biosynthesis. Its function is as follows. Catalyzes the synthesis of Und-PP-GlcNAc-ManNAcA (Lipid II), the second lipid-linked intermediate involved in enterobacterial common antigen (ECA) synthesis. This Yersinia pseudotuberculosis serotype IB (strain PB1/+) protein is UDP-N-acetyl-D-mannosaminuronic acid transferase.